The following is a 217-amino-acid chain: Protein GrpE (217 aa).

The interval Met-1 to Ser-63 is disordered. The span at Lys-10–Leu-32 shows a compositional bias: basic and acidic residues. Low complexity predominate over residues Ser-37 to Ser-63.

The protein belongs to the GrpE family. As to quaternary structure, homodimer.

The protein localises to the cytoplasm. Functionally, participates actively in the response to hyperosmotic and heat shock by preventing the aggregation of stress-denatured proteins, in association with DnaK and GrpE. It is the nucleotide exchange factor for DnaK and may function as a thermosensor. Unfolded proteins bind initially to DnaJ; upon interaction with the DnaJ-bound protein, DnaK hydrolyzes its bound ATP, resulting in the formation of a stable complex. GrpE releases ADP from DnaK; ATP binding to DnaK triggers the release of the substrate protein, thus completing the reaction cycle. Several rounds of ATP-dependent interactions between DnaJ, DnaK and GrpE are required for fully efficient folding. The chain is Protein GrpE from Leptospira borgpetersenii serovar Hardjo-bovis (strain JB197).